Consider the following 260-residue polypeptide: Protein SVS1 (260 aa).

A signal peptide spans 1-19; sequence MIFKILCSLLLVTSNFASA. Asn23, Asn249, and Asn256 each carry an N-linked (GlcNAc...) asparagine glycan.

Required for vanadate resistance. The polypeptide is Protein SVS1 (SVS1) (Saccharomyces cerevisiae (strain ATCC 204508 / S288c) (Baker's yeast)).